Consider the following 772-residue polypeptide: Calcium-binding mitochondrial carrier protein (772 aa).

The interval 1-377 (MFANRVRQAQ…SISDFEKSTG (377 aa)) is N-terminal domain. 4 consecutive EF-hand domains span residues 132 to 165 (LDAD…ELMA), 166 to 201 (KPEA…SLDP), 235 to 270 (LQQE…VKLR), and 347 to 382 (ITPL…NINK). 10 residues coordinate Ca(2+): Asp145, Asp147, Thr149, Tyr151, Glu156, Asp179, Asp181, Asn183, Tyr185, and Asp190. Residues Asp360, Asn362, Asp364, Lys366, and Asp371 each contribute to the Ca(2+) site. Residues 378-422 (LNINKIGGGTNYSDSYPSDSHVTIQNSSTTPSPSTPITNTAAAIA) are linker loop domain. A carrier domain region spans residues 432-720 (AQQVLESIEN…KALLPDAEYK (289 aa)). Solcar repeat units lie at residues 436 to 526 (LESI…LRDL), 535 to 616 (IYFP…MKTI), and 624 to 712 (LGPM…LQKA). Transmembrane regions (helical) follow at residues 442 to 459 (FALG…VYPI), 501 to 520 (GILP…LTVN), 545 to 558 (GFAG…TNPL), 591 to 610 (GAGA…FPTY), 630 to 647 (LLAG…VTPA), and 687 to 706 (GALA…LVSY). Residues 721-772 (PPTNAPITQKDFDVIRGNTNTVQRVIDMESKFGTLHQTRDNNKSSNGGENKN) form a C-terminal domain region. The tract at residues 751–772 (KFGTLHQTRDNNKSSNGGENKN) is disordered. Residues 763–772 (KSSNGGENKN) show a composition bias toward low complexity.

Belongs to the mitochondrial carrier (TC 2.A.29) family. In terms of assembly, homodimer (via N-terminus).

Its subcellular location is the mitochondrion inner membrane. Its function is as follows. Mitochondrial and calcium-binding carrier that catalyzes the calcium-dependent exchange of cytoplasmic glutamate with mitochondrial aspartate across the mitochondrial inner membrane. This Dictyostelium discoideum (Social amoeba) protein is Calcium-binding mitochondrial carrier protein (mcfO).